The sequence spans 187 residues: Adenylate kinase (187 aa).

10-15 (GSGKGT) provides a ligand contact to ATP. Positions 30–59 (STGDLLRAEVAAGSPLGVKAKEVMARGDLV) are NMP. AMP contacts are provided by residues Thr-31, Arg-36, 57-59 (DLV), 85-88 (GYPR), and Gln-92. The interval 126-136 (GRAKAEGREDD) is LID. Arg-127 lines the ATP pocket. Arg-133 and Arg-144 together coordinate AMP. ATP is bound at residue Gly-172.

Belongs to the adenylate kinase family. As to quaternary structure, monomer.

The protein resides in the cytoplasm. It carries out the reaction AMP + ATP = 2 ADP. The protein operates within purine metabolism; AMP biosynthesis via salvage pathway; AMP from ADP: step 1/1. In terms of biological role, catalyzes the reversible transfer of the terminal phosphate group between ATP and AMP. Plays an important role in cellular energy homeostasis and in adenine nucleotide metabolism. In Xanthomonas campestris pv. campestris (strain B100), this protein is Adenylate kinase.